Consider the following 347-residue polypeptide: Probable inactive UDP-arabinopyranose mutase 2 (347 aa).

An N-linked (Glc...) arginine glycan is attached at Arg145.

It belongs to the RGP family. Heteromers with UAM1 and UAM3. Post-translationally, is not reversibly glycosylated in vitro by UDP-glucose, UDP-xylose and UDP-galactose.

The protein localises to the golgi apparatus. Probable inactive UDP-L-arabinose mutase. Inactive in vitro, but associates with UAM1 and UAM3. The protein is Probable inactive UDP-arabinopyranose mutase 2 of Oryza sativa subsp. japonica (Rice).